The chain runs to 227 residues: 2,3-bisphosphoglycerate-dependent phosphoglycerate mutase (227 aa).

Substrate is bound by residues 7–14 (RHGQSEWN), 20–21 (TG), R59, 86–89 (ERHY), K97, 113–114 (RR), and 182–183 (GN). H8 (tele-phosphohistidine intermediate) is an active-site residue. E86 acts as the Proton donor/acceptor in catalysis.

Belongs to the phosphoglycerate mutase family. BPG-dependent PGAM subfamily. As to quaternary structure, homodimer.

The enzyme catalyses (2R)-2-phosphoglycerate = (2R)-3-phosphoglycerate. Its pathway is carbohydrate degradation; glycolysis; pyruvate from D-glyceraldehyde 3-phosphate: step 3/5. Its function is as follows. Catalyzes the interconversion of 2-phosphoglycerate and 3-phosphoglycerate. The chain is 2,3-bisphosphoglycerate-dependent phosphoglycerate mutase from Neisseria meningitidis serogroup B (strain ATCC BAA-335 / MC58).